A 389-amino-acid chain; its full sequence is Chalcone synthase 1 (389 aa).

The active site involves Cys-164.

This sequence belongs to the thiolase-like superfamily. Chalcone/stilbene synthases family.

The catalysed reaction is (E)-4-coumaroyl-CoA + 3 malonyl-CoA + 3 H(+) = 2',4,4',6'-tetrahydroxychalcone + 3 CO2 + 4 CoA. It functions in the pathway secondary metabolite biosynthesis; flavonoid biosynthesis. In terms of biological role, the primary product of this enzyme is 4,2',4',6'-tetrahydroxychalcone (also termed naringenin-chalcone or chalcone) which can under specific conditions spontaneously isomerize into naringenin. The polypeptide is Chalcone synthase 1 (CHS1) (Pisum sativum (Garden pea)).